The following is a 251-amino-acid chain: Triosephosphate isomerase 1 (251 aa).

Position 9–11 (9–11) interacts with substrate; the sequence is NWK. H95 functions as the Electrophile in the catalytic mechanism. Residue E167 is the Proton acceptor of the active site. Substrate is bound by residues G173, S213, and 234-235; that span reads GG.

It belongs to the triosephosphate isomerase family. In terms of assembly, homodimer.

It is found in the cytoplasm. The catalysed reaction is D-glyceraldehyde 3-phosphate = dihydroxyacetone phosphate. Its pathway is carbohydrate biosynthesis; gluconeogenesis. The protein operates within carbohydrate degradation; glycolysis; D-glyceraldehyde 3-phosphate from glycerone phosphate: step 1/1. Its function is as follows. Involved in the gluconeogenesis. Catalyzes stereospecifically the conversion of dihydroxyacetone phosphate (DHAP) to D-glyceraldehyde-3-phosphate (G3P). The sequence is that of Triosephosphate isomerase 1 from Listeria monocytogenes serovar 1/2a (strain ATCC BAA-679 / EGD-e).